The sequence spans 338 residues: Anthranilate phosphoribosyltransferase (338 aa).

Residues Gly-81, 84–85 (GD), Ser-89, 91–94 (NVST), 109–117 (KHGNRALSS), and Ala-121 each bind 5-phospho-alpha-D-ribose 1-diphosphate. Gly-81 is a binding site for anthranilate. Ser-93 provides a ligand contact to Mg(2+). Position 112 (Asn-112) interacts with anthranilate. An anthranilate-binding site is contributed by Arg-167. Mg(2+)-binding residues include Asp-226 and Glu-227.

It belongs to the anthranilate phosphoribosyltransferase family. Homodimer. Mg(2+) serves as cofactor.

The enzyme catalyses N-(5-phospho-beta-D-ribosyl)anthranilate + diphosphate = 5-phospho-alpha-D-ribose 1-diphosphate + anthranilate. It participates in amino-acid biosynthesis; L-tryptophan biosynthesis; L-tryptophan from chorismate: step 2/5. Functionally, catalyzes the transfer of the phosphoribosyl group of 5-phosphorylribose-1-pyrophosphate (PRPP) to anthranilate to yield N-(5'-phosphoribosyl)-anthranilate (PRA). This is Anthranilate phosphoribosyltransferase from Rhodopseudomonas palustris (strain HaA2).